A 291-amino-acid chain; its full sequence is 4-hydroxy-tetrahydrodipicolinate synthase (291 aa).

Thr-47 is a pyruvate binding site. The active-site Proton donor/acceptor is Tyr-136. Residue Lys-164 is the Schiff-base intermediate with substrate of the active site. Ile-206 contributes to the pyruvate binding site.

Belongs to the DapA family. In terms of assembly, homotetramer; dimer of dimers.

The protein resides in the cytoplasm. The catalysed reaction is L-aspartate 4-semialdehyde + pyruvate = (2S,4S)-4-hydroxy-2,3,4,5-tetrahydrodipicolinate + H2O + H(+). Its pathway is amino-acid biosynthesis; L-lysine biosynthesis via DAP pathway; (S)-tetrahydrodipicolinate from L-aspartate: step 3/4. Catalyzes the condensation of (S)-aspartate-beta-semialdehyde [(S)-ASA] and pyruvate to 4-hydroxy-tetrahydrodipicolinate (HTPA). This chain is 4-hydroxy-tetrahydrodipicolinate synthase, found in Leuconostoc citreum (strain KM20).